Reading from the N-terminus, the 232-residue chain is Glutathione S-transferase U10 (232 aa).

Residues 6-85 (SKVILHGTWI…YIDETWTNSP (80 aa)) enclose the GST N-terminal domain. Glutathione-binding positions include 16-17 (ST), 42-43 (NK), 56-57 (KI), and 69-70 (ES). Residues 91 to 226 (DPYERAQVRF…FIQKYRQKCL (136 aa)) form the GST C-terminal domain.

Belongs to the GST superfamily. Tau family.

It localises to the cytoplasm. The protein resides in the cytosol. It catalyses the reaction RX + glutathione = an S-substituted glutathione + a halide anion + H(+). Its function is as follows. May be involved in the conjugation of reduced glutathione to a wide number of exogenous and endogenous hydrophobic electrophiles and have a detoxification role against certain herbicides. The polypeptide is Glutathione S-transferase U10 (GSTU10) (Arabidopsis thaliana (Mouse-ear cress)).